The primary structure comprises 832 residues: MMEHDVEDLINQLDISEKAMLLSGTDLWHTAAIPRLNIPSIRLSDGPNGIRGTSFFNSSPSACFPCGTALGATFDKKLLFEVGEYLAEEAKAKGVSVVLGPTVNIHRGPLNGRGFESFSEDSTLSGLAASYVILGLQSKNVQACIKHFVCNDMEDERNSVSIDVSQRALREVYLMPFQLACKYSNFKSLMTSYNKVNGEHVSQSRILLDNILRKEWEWKGTIISDWFGTYSLKKAIDAGLDLEMPGKPRFRNVNTIQHLVGSKELSESILDERAKNVLKLVKHSWQNTEAENHCELNNDSSCLREALKKFASQSIVLLKNKKKLLPLSRKGTFAVIGPNAKVCNYSGGGSANLKPYYTVSMYDGIAAKIDGVPEYALGCHNYLNLPNIANLLVNPRTGKHGYVAKFYLEPATSENRTLIDDYDLEDGVVRFYDYCNDKMKDGYFYIDIEGYLIPDEDAVYEFGISVFGTALLFIDDVLLIDNKTKQTPTNHTFEFGTIEERNSIYLKKGRKYNVRVEYGSAATYTLSTNLSPSTGGRYSIGCVKVIDPETEIDYAVRVAKSVDCVILCVGLTAEWETEGEDRKTMTLPSLSDKLVYSILQSNPNTVVVTQSGTPIEMPWISEAHTLLHIWYNGNELGNALANIIFGEQNPCGKLPITFPKKLKDNPAYLSFRSSRGHCVYGEDVFVGYKYYEAVEREVLFPFGYGLSYTTFELSNLYLKNCGERLRIDLEISNTGPMSGAEIIQVYISQIVRSVNRPVKELKEFSKVVLCPKETKLIRIELDIKYATSFYDELNEKWCSEEGEYNVLVGTSSKDIALTGKFTLPKTIHWTGL.

The active site involves D225. The region spanning 397-556 (TGKHGYVAKF…DPETEIDYAV (160 aa)) is the PA14 domain.

Belongs to the glycosyl hydrolase 3 family.

Its subcellular location is the cytoplasm. The catalysed reaction is Hydrolysis of terminal, non-reducing beta-D-glucosyl residues with release of beta-D-glucose.. The sequence is that of Putative beta-glucosidase from Schizosaccharomyces pombe (strain 972 / ATCC 24843) (Fission yeast).